Reading from the N-terminus, the 218-residue chain is Adenylate kinase (218 aa).

10–15 (GVGKGT) is a binding site for ATP. The interval 30–59 (STGDMLRSAIKQGTELGLKAKSFIDKGELV) is NMP. AMP-binding positions include Thr31, Arg36, 57–59 (ELV), 86–89 (GFPR), and Gln93. The tract at residues 127–164 (GRRIAPSTGKVYHVVYNPPKVEGKCDETGEDLIIREDD) is LID. Residues Arg128 and 137 to 138 (VY) each bind ATP. AMP-binding residues include Arg161 and Arg172. An ATP-binding site is contributed by Gln200.

The protein belongs to the adenylate kinase family. In terms of assembly, monomer.

The protein resides in the cytoplasm. It carries out the reaction AMP + ATP = 2 ADP. Its pathway is purine metabolism; AMP biosynthesis via salvage pathway; AMP from ADP: step 1/1. Catalyzes the reversible transfer of the terminal phosphate group between ATP and AMP. Plays an important role in cellular energy homeostasis and in adenine nucleotide metabolism. The polypeptide is Adenylate kinase (Chloroherpeton thalassium (strain ATCC 35110 / GB-78)).